The primary structure comprises 724 residues: Long-chain-fatty-acid--CoA ligase ACSBG1 (724 aa).

A disordered region spans residues 1–51 (MPRNSGAGYGCPHGDPSMLDSRETPQESRQDMTVGTTQEKLKTSSLTDRQP). Over residues 20-30 (DSRETPQESRQ) the composition is skewed to basic and acidic residues. Polar residues predominate over residues 31-51 (DMTVGTTQEKLKTSSLTDRQP). A phosphoserine mark is found at S53 and S56. ATP contacts are provided by residues 282–290 (TSGTTGNPK), 472–477 (AGYGLS), D550, and R565. Residue Y658 is modified to Phosphotyrosine. K701 serves as a coordination point for ATP.

Belongs to the ATP-dependent AMP-binding enzyme family. Bubblegum subfamily.

Its subcellular location is the cytoplasm. The protein resides in the cytoplasmic vesicle. It localises to the microsome. The protein localises to the endoplasmic reticulum. It is found in the cell membrane. The catalysed reaction is a long-chain fatty acid + ATP + CoA = a long-chain fatty acyl-CoA + AMP + diphosphate. It carries out the reaction (E)-hexadec-2-enoate + ATP + CoA = (2E)-hexadecenoyl-CoA + AMP + diphosphate. It catalyses the reaction hexadecanoate + ATP + CoA = hexadecanoyl-CoA + AMP + diphosphate. Its function is as follows. Catalyzes the conversion of fatty acids such as long-chain and very long-chain fatty acids to their active form acyl-CoAs for both synthesis of cellular lipids, and degradation via beta-oxidation. Can activate diverse saturated, monosaturated and polyunsaturated fatty acids. The sequence is that of Long-chain-fatty-acid--CoA ligase ACSBG1 from Macaca fascicularis (Crab-eating macaque).